We begin with the raw amino-acid sequence, 193 residues long: Potassium-transporting ATPase KdpC subunit (193 aa).

Residues Ile14–Ala34 form a helical membrane-spanning segment.

This sequence belongs to the KdpC family. In terms of assembly, the system is composed of three essential subunits: KdpA, KdpB and KdpC.

It localises to the cell membrane. Its function is as follows. Part of the high-affinity ATP-driven potassium transport (or Kdp) system, which catalyzes the hydrolysis of ATP coupled with the electrogenic transport of potassium into the cytoplasm. This subunit acts as a catalytic chaperone that increases the ATP-binding affinity of the ATP-hydrolyzing subunit KdpB by the formation of a transient KdpB/KdpC/ATP ternary complex. The chain is Potassium-transporting ATPase KdpC subunit from Bacillus cereus (strain ATCC 14579 / DSM 31 / CCUG 7414 / JCM 2152 / NBRC 15305 / NCIMB 9373 / NCTC 2599 / NRRL B-3711).